The sequence spans 492 residues: Asparagine--tRNA ligase, mitochondrial (492 aa).

The protein belongs to the class-II aminoacyl-tRNA synthetase family.

It is found in the mitochondrion matrix. The enzyme catalyses tRNA(Asn) + L-asparagine + ATP = L-asparaginyl-tRNA(Asn) + AMP + diphosphate + H(+). In terms of biological role, catalyzes the attachment of asparagine to tRNA(Asn) in the mitochondrion. This chain is Asparagine--tRNA ligase, mitochondrial (SLM5), found in Saccharomyces cerevisiae (strain ATCC 204508 / S288c) (Baker's yeast).